A 111-amino-acid polypeptide reads, in one-letter code: uncharacterized protein (111 aa).

The protein localises to the cytoplasm. The protein resides in the nucleus. This is an uncharacterized protein from Schizosaccharomyces pombe (strain 972 / ATCC 24843) (Fission yeast).